Here is a 71-residue protein sequence, read N- to C-terminus: Gas vesicle protein A (71 aa).

Residues 12–22 (LAEVIDRILDK) form an alpha helix 1 region. The interval 26-34 (VDAWVRVSL) is beta-strand 1. The segment at 35–37 (VGI) is beta turn. Residues 38 to 46 (ELLAIEARI) are beta-strand 2. An alpha helix 2 region spans residues 51 to 70 (VETYLKYAEAVGLTQSAAVP).

Belongs to the gas vesicle GvpA family. The gas vesicle shell is 2 nm thick and consists of a single layer of this protein. It forms helical ribs nearly perpendicular to the long axis of the vesicle.

The protein localises to the gas vesicle shell. In terms of biological role, gas vesicles are hollow, gas filled proteinaceous nanostructures found in some microorganisms. During planktonic growth they allow positioning of the organism at a favorable depth for light or nutrient acquisition. GvpA forms the protein shell. The chain is Gas vesicle protein A from Microchaete diplosiphon (Fremyella diplosiphon).